Consider the following 448-residue polypeptide: Cytoplasmic tRNA 2-thiolation protein 2 (448 aa).

Belongs to the CTU2/NCS2 family.

It localises to the cytoplasm. Its pathway is tRNA modification; 5-methoxycarbonylmethyl-2-thiouridine-tRNA biosynthesis. Its function is as follows. Plays a central role in 2-thiolation of mcm(5)S(2)U at tRNA wobble positions of tRNA(Lys), tRNA(Glu) and tRNA(Gln). May act by forming a heterodimer with NCS6 that ligates sulfur from thiocarboxylated URM1 onto the uridine of tRNAs at wobble position. Prior mcm(5) tRNA modification by the elongator complex is required for 2-thiolation. May also be involved in protein urmylation. In Debaryomyces hansenii (strain ATCC 36239 / CBS 767 / BCRC 21394 / JCM 1990 / NBRC 0083 / IGC 2968) (Yeast), this protein is Cytoplasmic tRNA 2-thiolation protein 2.